Here is a 316-residue protein sequence, read N- to C-terminus: Probable protein-L-isoaspartate O-methyltransferase (316 aa).

S-adenosyl-L-homocysteine is bound by residues 103–106 (ATIS), H111, S136, 157–158 (EH), 187–188 (DG), T263, and Q268. S106 is an active-site residue.

Belongs to the methyltransferase superfamily. L-isoaspartyl/D-aspartyl protein methyltransferase family.

It localises to the cytoplasm. It is found in the cytosol. The enzyme catalyses [protein]-L-isoaspartate + S-adenosyl-L-methionine = [protein]-L-isoaspartate alpha-methyl ester + S-adenosyl-L-homocysteine. Its function is as follows. Initiates the repair of damaged proteins by catalyzing methyl esterification of L-isoaspartyl and D-aspartyl residues produced by spontaneous isomerization and racemization of L-aspartyl and L-asparaginyl residues in aging peptides and proteins. The protein is Probable protein-L-isoaspartate O-methyltransferase (pcmA) of Dictyostelium discoideum (Social amoeba).